Consider the following 537-residue polypeptide: 2-isopropylmalate synthase (537 aa).

One can recognise a Pyruvate carboxyltransferase domain in the interval 8–269 (VLIFDTTLRD…YFNGYLGRAE (262 aa)). The Mn(2+) site is built by Asp-17, His-208, His-210, and Asn-244. Residues 408 to 537 (QLAGVQVSCG…QRAPLPAPAL (130 aa)) are regulatory domain.

Belongs to the alpha-IPM synthase/homocitrate synthase family. LeuA type 1 subfamily. Homodimer. The cofactor is Mn(2+).

It localises to the cytoplasm. It catalyses the reaction 3-methyl-2-oxobutanoate + acetyl-CoA + H2O = (2S)-2-isopropylmalate + CoA + H(+). Its pathway is amino-acid biosynthesis; L-leucine biosynthesis; L-leucine from 3-methyl-2-oxobutanoate: step 1/4. Its function is as follows. Catalyzes the condensation of the acetyl group of acetyl-CoA with 3-methyl-2-oxobutanoate (2-ketoisovalerate) to form 3-carboxy-3-hydroxy-4-methylpentanoate (2-isopropylmalate). This Synechococcus sp. (strain RCC307) protein is 2-isopropylmalate synthase.